Reading from the N-terminus, the 1148-residue chain is MGELSPVCLYLLLQGLLLCNTGAARNLNELKMECPHTIRLGQGLVVGSVELPSLPIQQVETLKLESSCNFDLHTSTAGQQSFTKWTWEIKGDLAENTQASSTSFQTKSSEVNLRGLCLIPTLVVETAARMRKTIACYDLSCNQTVCQPTVYLMGPIQTCITTKSCLLSLGDQRIQVNYEKTYCVSGQLVEGICFNPIHTMALSQPSHTYDIMTMMVRCFLVIKKVTSGDSMKIEKNFETLVQKNGCTANNFQGYYICLIGSSSEPLYVPALDDYRSAEVLSRMAFAPHGEDHDIEKNAVSAMRIAGKVTGKAPSTESSDTVQGIAFSGSPLYTSTGVLTSKDDPVYIWAPGIIMEGNHSICEKKTLPLTWTGFISLPGEIEKTTQCTVFCTLAGPGADCEAYSETGIFNISSPTCSINRVQRFRGSEQQIKFVCQRVDMDITVYCNGMKKVILTKTLVIGQCIYTFTSIFSLIPGVAHSLAVELCVPGLHGWATMLLLLTLCFGWVLIPTITMILLKILIAFAYLCSKYNTDSKFRILIEKVKREYQKTMGSMVCEVCQYECETAKELESHRKSCSIGSCPYCLNPSEATTSALQAHFKVCKLTSRFQENLRKSLTVYEPMQGCYRTLSLFRYRSRFFVGLVWCVLLVLELIVWAASAETQNLNAGWTDTAHGSGIIPMKTDLELDFSLPSSASYTYRRQLQNPANEQEKIPFHLQLSKQVIHAEIQHLGHWMDATFNLKTAFHCYGSCEKYAYPWQTAGCFIEKDYEYETGWGCNPPDCPGVGTGCTACGVYLDKLKSVGKVFKIVSLRYTRKVCIQLGTEQTCKTVDSNDCLITTSVKVCLIGTISKFQPSDTLLFLGPLQQGGLIFKQWCTTTCQFGDPGDIMSTPTGMKCPELNGSFRKKCAFATTPVCQFDGNTISGYKRMIATKDSFQSFNVTEPHISTSALEWIDPDSSLRDHINVIVSRDLSFQDLSETPCQIDLATASIDGAWGSGVGFNLVCTVSLTECSAFLTSIKACDAAMCYGSTTANLVRGQNTIHIVGKGGHSGSKFMCCHDTKCSSTGLVAAAPHLDRVTGYNQADSDKIFDDGAPECGMSCWFKKSGEWILGVLNGNWMVVAVLVVLLILSILLFTLCCPRRPSYRKEHKP.

Positions Met-1–Ala-23 are cleaved as a signal peptide. The Lumenal portion of the chain corresponds to Ala-24–Met-495. 6 cysteine pairs are disulfide-bonded: Cys-34-Cys-159, Cys-68-Cys-165, Cys-117-Cys-136, Cys-141-Cys-146, Cys-183-Cys-193, and Cys-218-Cys-257. Asn-142 is a glycosylation site (N-linked (GlcNAc...) asparagine; by host). Asn-357 carries an N-linked (GlcNAc...) asparagine; by host glycan. 4 cysteine pairs are disulfide-bonded: Cys-386-Cys-445, Cys-390-Cys-399, Cys-415-Cys-434, and Cys-462-Cys-485. An N-linked (GlcNAc...) asparagine; by host glycan is attached at Asn-409. A helical transmembrane segment spans residues Leu-496 to Leu-516. The Cytoplasmic segment spans residues Lys-517–Phe-637. Positions Cys-526–Lys-543 are binding to the ribonucleoprotein. 2 consecutive CCHC-type zinc fingers follow at residues Cys-555–Cys-575 and Cys-580–Cys-601. 3 binding to the ribonucleoprotein regions span residues Phe-598–Leu-615, Lys-602–Lys-613, and Met-621–Ser-635. In terms of domain architecture, ITAM spans Met-621–Cys-644. The YxxL motif lies at Tyr-625–Leu-628. Residues Phe-638 to Ala-658 form a helical membrane-spanning segment. Residues Glu-659–Asn-1114 are Lumenal-facing. Intrachain disulfides connect Cys-745–Cys-780, Cys-749–Cys-787, Cys-761–Cys-894, Cys-775–Cys-905, Cys-790–Cys-913, Cys-816–Cys-825, Cys-833–Cys-842, and Cys-873–Cys-877. Positions Tyr-767–Cys-787 are fusion loop. Asn-937 carries an N-linked (GlcNAc...) asparagine; by host glycan. Disulfide bonds link Cys-979–Cys-1009, Cys-1002–Cys-1054, Cys-1019–Cys-1024, Cys-1055–Cys-1060, and Cys-1094–Cys-1098. Residues Trp-1115–Cys-1135 form a helical membrane-spanning segment. 2 binding to the ribonucleoprotein regions span residues Leu-1131–Arg-1143 and Leu-1131–Pro-1148. Residues Cys-1136–Pro-1148 lie on the Cytoplasmic side of the membrane.

This sequence belongs to the hantavirus envelope glycoprotein family. In terms of assembly, homodimer. Homotetramer; forms heterotetrameric Gn-Gc spikes in the pre-fusion conformation. Interacts (via C-terminus) with the nucleoprotein. Interacts with host TUFM; this interaction contributes to the virus-induced degradation of mitochondria by autophagy, which leads to degradation of host MAVS and inhibition of type I interferon (IFN) responses. Interacts with host MAP1LC3B; this interaction contributes to the virus-induced degradation of mitochondria by autophagy, which leads to degradation of host MAVS and inhibition of type I interferon (IFN) responses. As to quaternary structure, homodimer. Homotetramer; forms heterotetrameric Gn-Gc spikes in the pre-fusion conformation. Homotrimer; forms homotrimer in the post-fusion conformation at acidic pH. Interacts (via C-terminus) with the nucleoprotein. Envelope polyprotein precursor is quickly cleaved in vivo just after synthesis, presumably by host signal peptidase.

The protein localises to the virion membrane. It localises to the host cell surface. It is found in the host Golgi apparatus membrane. The protein resides in the host endoplasmic reticulum membrane. Its subcellular location is the host mitochondrion. Functionally, forms homotetramers with glycoprotein C at the surface of the virion. Attaches the virion to host cell receptors including integrin ITGAV/ITGB3. This attachment induces virion internalization predominantly through clathrin-dependent endocytosis. Mediates the assembly and budding of infectious virus particles through its interaction with the nucleocapsid protein and the viral genome. May dysregulate normal immune and endothelial cell responses through an ITAM motif. Translocates to mitochondria, binds to host TUFM and recruits MAP1LC3B. These interactions induce mitochondrial autophagy and therefore destruction of host MAVS leading to inhibition of type I interferon (IFN) responses. Concomitant breakdown of glycoprotein N is apparently prevented by the nucleoprotein that may inhibit Gn-stimulated autophagosome-lysosome fusion. Interacts with the viral genomic RNA. Its function is as follows. Forms homotetramers with glycoprotein N at the surface of the virion. Attaches the virion to host cell receptors including integrin ITGAV/ITGB3. This attachment induces virion internalization predominantly through clathrin-dependent endocytosis. Class II fusion protein that promotes fusion of viral membrane with host endosomal membrane after endocytosis of the virion. This is Envelopment polyprotein (GP) from Puumala virus (strain K27).